Here is a 255-residue protein sequence, read N- to C-terminus: Hydroxyacylglutathione hydrolase (255 aa).

Zn(2+)-binding residues include His56, His58, Asp60, His61, His114, Asp133, and His171.

The protein belongs to the metallo-beta-lactamase superfamily. Glyoxalase II family. In terms of assembly, monomer. Requires Zn(2+) as cofactor.

It catalyses the reaction an S-(2-hydroxyacyl)glutathione + H2O = a 2-hydroxy carboxylate + glutathione + H(+). It functions in the pathway secondary metabolite metabolism; methylglyoxal degradation; (R)-lactate from methylglyoxal: step 2/2. Its function is as follows. Thiolesterase that catalyzes the hydrolysis of S-D-lactoyl-glutathione to form glutathione and D-lactic acid. The protein is Hydroxyacylglutathione hydrolase of Fuscovulum blasticum (Rhodobacter blasticus).